The primary structure comprises 1331 residues: uncharacterized protein (1331 aa).

8 helical membrane-spanning segments follow: residues 373-393 (VIGV…SLIV), 487-507 (ALFL…LILI), 534-554 (LLIF…SFGI), 579-599 (VVGL…ISLL), 653-673 (LVFL…SFAT), 1206-1226 (VIAV…TTLI), 1255-1275 (IPLF…LIAL), and 1297-1317 (AIGS…LNWL).

Belongs to the ABC-4 integral membrane protein family.

It localises to the cell membrane. This is an uncharacterized protein from Mycoplasma genitalium (strain ATCC 33530 / DSM 19775 / NCTC 10195 / G37) (Mycoplasmoides genitalium).